We begin with the raw amino-acid sequence, 122 residues long: Large ribosomal subunit protein uL18 (122 aa).

This sequence belongs to the universal ribosomal protein uL18 family. In terms of assembly, part of the 50S ribosomal subunit; part of the 5S rRNA/L5/L18/L25 subcomplex. Contacts the 5S and 23S rRNAs.

This is one of the proteins that bind and probably mediate the attachment of the 5S RNA into the large ribosomal subunit, where it forms part of the central protuberance. This Agathobacter rectalis (strain ATCC 33656 / DSM 3377 / JCM 17463 / KCTC 5835 / VPI 0990) (Eubacterium rectale) protein is Large ribosomal subunit protein uL18.